The following is an 838-amino-acid chain: Protein translocase subunit SecA (838 aa).

Residues glutamine 86, 104 to 108 (GEGKT), and aspartate 493 contribute to the ATP site. The segment at 793–838 (NTQAVSGGEDSGKKKTKKPVVKSNTVKRNDPCPCGSGKKYKNCHGQ) is disordered. Zn(2+) is bound by residues cysteine 824, cysteine 826, cysteine 835, and histidine 836.

This sequence belongs to the SecA family. Monomer and homodimer. Part of the essential Sec protein translocation apparatus which comprises SecA, SecYEG and auxiliary proteins SecDF. Other proteins may also be involved. Zn(2+) is required as a cofactor.

The protein resides in the cell membrane. It localises to the cytoplasm. The enzyme catalyses ATP + H2O + cellular proteinSide 1 = ADP + phosphate + cellular proteinSide 2.. Part of the Sec protein translocase complex. Interacts with the SecYEG preprotein conducting channel. Has a central role in coupling the hydrolysis of ATP to the transfer of proteins into and across the cell membrane, serving as an ATP-driven molecular motor driving the stepwise translocation of polypeptide chains across the membrane. In Oceanobacillus iheyensis (strain DSM 14371 / CIP 107618 / JCM 11309 / KCTC 3954 / HTE831), this protein is Protein translocase subunit SecA.